An 876-amino-acid polypeptide reads, in one-letter code: Translation initiation factor IF-2 (876 aa).

In terms of domain architecture, tr-type G spans 378 to 547; the sequence is TRPPIITIMG…LTQSEMLELK (170 aa). The segment at 387-394 is G1; that stretch reads GHVDHGKT. 387–394 contributes to the GTP binding site; sequence GHVDHGKT. Residues 412–416 are G2; that stretch reads RITQH. The tract at residues 433 to 436 is G3; it reads DTPG. Residues 433-437 and 487-490 contribute to the GTP site; these read DTPGH and NKID. Positions 487 to 490 are G4; the sequence is NKID. Residues 523-525 form a G5 region; it reads SAK.

Belongs to the TRAFAC class translation factor GTPase superfamily. Classic translation factor GTPase family. IF-2 subfamily.

The protein resides in the cytoplasm. Its function is as follows. One of the essential components for the initiation of protein synthesis. Protects formylmethionyl-tRNA from spontaneous hydrolysis and promotes its binding to the 30S ribosomal subunits. Also involved in the hydrolysis of GTP during the formation of the 70S ribosomal complex. The sequence is that of Translation initiation factor IF-2 from Buchnera aphidicola subsp. Baizongia pistaciae (strain Bp).